Consider the following 444-residue polypeptide: Guanosine nucleotide diphosphate dissociation inhibitor 2 (444 aa).

The protein belongs to the Rab GDI family. Expressed in roots and floral buds.

Functionally, regulates the GDP/GTP exchange reaction of most RAB proteins by inhibiting the dissociation of GDP from them, and the subsequent binding of GTP. The chain is Guanosine nucleotide diphosphate dissociation inhibitor 2 (GDI2) from Arabidopsis thaliana (Mouse-ear cress).